Consider the following 527-residue polypeptide: Glucose-6-phosphate isomerase (527 aa).

Residue Glu-323 is the Proton donor of the active site. Active-site residues include His-352 and Lys-454.

It belongs to the GPI family.

The protein resides in the cytoplasm. It carries out the reaction alpha-D-glucose 6-phosphate = beta-D-fructose 6-phosphate. The protein operates within carbohydrate biosynthesis; gluconeogenesis. It participates in carbohydrate degradation; glycolysis; D-glyceraldehyde 3-phosphate and glycerone phosphate from D-glucose: step 2/4. Catalyzes the reversible isomerization of glucose-6-phosphate to fructose-6-phosphate. The polypeptide is Glucose-6-phosphate isomerase (Prochlorococcus marinus (strain MIT 9301)).